The following is a 1062-amino-acid chain: 3-hydroxy-3-methylglutaryl-coenzyme A reductase 2 (1062 aa).

At M1–P34 the chain is on the cytoplasmic side. Residues I35 to G55 traverse the membrane as a helical segment. Over S56 to Q230 the chain is Lumenal. N-linked (GlcNAc...) asparagine glycosylation occurs at N61. Residues I231–L251 form a helical membrane-spanning segment. Residues D233–V403 enclose the SSD domain. Residues F252–R261 are Cytoplasmic-facing. The helical transmembrane segment at F262–V282 threads the bilayer. The Lumenal segment spans residues T283–G287. The chain crosses the membrane as a helical span at residues V288–F308. The Cytoplasmic segment spans residues E309 to D355. The chain crosses the membrane as a helical span at residues Y356 to L375. Topologically, residues P376 to Q377 are lumenal. A helical transmembrane segment spans residues F378–I398. Over S399–K450 the chain is Cytoplasmic. A helical membrane pass occupies residues F451 to G471. The Lumenal segment spans residues N472 to P564. N484 is a glycosylation site (N-linked (GlcNAc...) asparagine). A helical transmembrane segment spans residues V565–M585. Residues K586–G1062 are Cytoplasmic-facing. The Charge relay system role is filled by E744. S750–K756 is a CoA binding site. NADP(+) contacts are provided by residues S811–F813 and D838–S846. K877 (charge relay system) is an active-site residue. CoA is bound at residue V906 to K908. The active-site Charge relay system is D953. CoA is bound at residue A1048–H1049. Catalysis depends on H1049, which acts as the Proton donor. Position 1053-1054 (N1053–R1054) interacts with NADP(+).

Belongs to the HMG-CoA reductase family.

The protein resides in the endoplasmic reticulum membrane. It carries out the reaction (R)-mevalonate + 2 NADP(+) + CoA = (3S)-3-hydroxy-3-methylglutaryl-CoA + 2 NADPH + 2 H(+). It participates in metabolic intermediate biosynthesis; (R)-mevalonate biosynthesis; (R)-mevalonate from acetyl-CoA: step 3/3. HMG-CoA reductase; part of the first module of ergosterol biosynthesis pathway that includes the early steps of the pathway, conserved across all eukaryotes, and which results in the formation of mevalonate from acetyl-coenzyme A (acetyl-CoA). Hmg1 and hmg2 catalyze the reduction of hydroxymethylglutaryl-CoA (HMG-CoA) to mevalonate. The first module starts with the action of the cytosolic acetyl-CoA acetyltransferase erg10B that catalyzes the formation of acetoacetyl-CoA. The hydroxymethylglutaryl-CoA synthases erg13A and erg13B then condense acetyl-CoA with acetoacetyl-CoA to form HMG-CoA. The rate-limiting step of the early module is the reduction to mevalonate by the 3-hydroxy-3-methylglutaryl-coenzyme A (HMG-CoA) reductases hmg1 and hmg2. Mevalonate is also a precursor for the extracellular siderophore triacetylfusarinine C (TAFC). This is 3-hydroxy-3-methylglutaryl-coenzyme A reductase 2 from Aspergillus fumigatus (strain ATCC MYA-4609 / CBS 101355 / FGSC A1100 / Af293) (Neosartorya fumigata).